The sequence spans 165 residues: Putative ankyrin repeat domain-containing protein 20A5 (165 aa).

3 ANK repeats span residues 66-95 (QHRT…QIDI), 99-128 (ENRT…NPNL), and 132-161 (YGNT…NIEA).

The protein is Putative ankyrin repeat domain-containing protein 20A5 (ANKRD20A5P) of Homo sapiens (Human).